Consider the following 405-residue polypeptide: Subtilisin-like protease 6 (405 aa).

The signal sequence occupies residues 1-18; that stretch reads FITKAIPIVLAALSAVNG. The propeptide occupies 19 to 125; that stretch reads AKILEAGPHA…VRTSTNGTNL (107 aa). Positions 34–118 constitute an Inhibitor I9 domain; the sequence is KYIVVMKKDV…YIEPDFVVRT (85 aa). 2 N-linked (GlcNAc...) asparagine glycosylation sites follow: asparagine 121 and asparagine 124. Positions 133 to 405 constitute a Peptidase S8 domain; it reads SWGLARVGSK…GEGTTGKLIY (273 aa). Catalysis depends on charge relay system residues aspartate 165 and histidine 196. Residues asparagine 250 and asparagine 262 are each glycosylated (N-linked (GlcNAc...) asparagine). Serine 356 serves as the catalytic Charge relay system.

Belongs to the peptidase S8 family.

The protein localises to the secreted. Secreted subtilisin-like serine protease with keratinolytic activity that contributes to pathogenicity. This is Subtilisin-like protease 6 (SUB6) from Trichophyton schoenleinii.